The primary structure comprises 389 residues: MNLHEYQGKQLFAEYGLPVSKGVAAETPAEAASAAGILGGDTWVVKAQVHAGGRGKAGGVKLVKSKAEIEEFAKQWLGKNLVTYQTDENGQPVSRILVETCTDIDQELYLGAVVDRSTRRIVFMASTEGGVEIEKVAEETPEKILKAIIDPLAGAQPYQARDLAFKLGLEGKQIKQFTQIFLGLAKMFKEKDLALLEINPLVITKEGDLHCLDAKINIDGNALYRQPALKEMHDPSQEDEREAHAAKWELNYVALDGNIGCMVNGAGLAMGTMDIVKLHGGQPANFLDVGGGATKERVVEAFKIILSDESVSAVLINIFGGIVRCDLIAEGVIGAVEEVGVKIPVVCRLEGNNAELGAKVLADSGLNIIAATSLTDAAEQVVKAAKGDA.

The 236-residue stretch at 9–244 folds into the ATP-grasp domain; the sequence is KQLFAEYGLP…PSQEDEREAH (236 aa). Residues K46, 53 to 55, E99, T102, and E107 contribute to the ATP site; that span reads GRG. Residues N199 and D213 each contribute to the Mg(2+) site. Substrate is bound by residues N264 and 321-323; that span reads GIV.

It belongs to the succinate/malate CoA ligase beta subunit family. As to quaternary structure, heterotetramer of two alpha and two beta subunits. It depends on Mg(2+) as a cofactor.

The enzyme catalyses succinate + ATP + CoA = succinyl-CoA + ADP + phosphate. It catalyses the reaction GTP + succinate + CoA = succinyl-CoA + GDP + phosphate. It participates in carbohydrate metabolism; tricarboxylic acid cycle; succinate from succinyl-CoA (ligase route): step 1/1. Functionally, succinyl-CoA synthetase functions in the citric acid cycle (TCA), coupling the hydrolysis of succinyl-CoA to the synthesis of either ATP or GTP and thus represents the only step of substrate-level phosphorylation in the TCA. The beta subunit provides nucleotide specificity of the enzyme and binds the substrate succinate, while the binding sites for coenzyme A and phosphate are found in the alpha subunit. The chain is Succinate--CoA ligase [ADP-forming] subunit beta from Teredinibacter turnerae (strain ATCC 39867 / T7901).